A 547-amino-acid polypeptide reads, in one-letter code: Rho GTPase-activating protein 36 (547 aa).

Residues 1–40 form the signal peptide; sequence MGGCNPFLKAARTLCPRIMPPLLFLSAFIFLVNVLGGAPG. Residues 226–426 form the Rho-GAP domain; it reads MSLNPIAKQI…AMIDNWDILF (201 aa). Residues 493–547 are disordered; it reads FDEGSSEEPAVPPGTAHSHDDEEGAGNPPIPEQDRPLLRVPREKQAKTGIGYFFP. Residues 524–538 are compositionally biased toward basic and acidic residues; that stretch reads EQDRPLLRVPREKQA.

Functionally, GTPase activator for the Rho-type GTPases by converting them to an inactive GDP-bound state. The polypeptide is Rho GTPase-activating protein 36 (ARHGAP36) (Ailuropoda melanoleuca (Giant panda)).